Reading from the N-terminus, the 601-residue chain is tRNA 5-methylaminomethyl-2-thiouridine biosynthesis bifunctional protein MnmC (601 aa).

The tRNA (mnm(5)s(2)U34)-methyltransferase stretch occupies residues 1-237 (MSDPTASPLI…KKQRLEAVAP (237 aa)). An FAD-dependent cmnm(5)s(2)U34 oxidoreductase region spans residues 252–601 (IGGGIAGAAM…FSSRVATGAV (350 aa)).

The protein in the N-terminal section; belongs to the methyltransferase superfamily. tRNA (mnm(5)s(2)U34)-methyltransferase family. This sequence in the C-terminal section; belongs to the DAO family. The cofactor is FAD.

The protein resides in the cytoplasm. It catalyses the reaction 5-aminomethyl-2-thiouridine(34) in tRNA + S-adenosyl-L-methionine = 5-methylaminomethyl-2-thiouridine(34) in tRNA + S-adenosyl-L-homocysteine + H(+). Catalyzes the last two steps in the biosynthesis of 5-methylaminomethyl-2-thiouridine (mnm(5)s(2)U) at the wobble position (U34) in tRNA. Catalyzes the FAD-dependent demodification of cmnm(5)s(2)U34 to nm(5)s(2)U34, followed by the transfer of a methyl group from S-adenosyl-L-methionine to nm(5)s(2)U34, to form mnm(5)s(2)U34. This Caulobacter sp. (strain K31) protein is tRNA 5-methylaminomethyl-2-thiouridine biosynthesis bifunctional protein MnmC.